Consider the following 1776-residue polypeptide: Signal-induced proliferation-associated 1-like protein 3 (1776 aa).

2 disordered regions span residues 41–157 (AQNG…GRAF) and 240–325 (PGAL…EASR). Residues 54-69 (PAATTTRPSPTTPAMP) show a composition bias toward low complexity. Polar residues-rich tracts occupy residues 89–99 (EQSNPSPSQDT) and 112–129 (RNLQ…SSGS). Position 94 is a phosphoserine (S94). The segment covering 131-140 (AFHRLSRRRS) has biased composition (basic residues). A Phosphoserine modification is found at S140. A compositionally biased stretch (polar residues) spans 257–268 (GQPTKDSLQSLQ). At S394 the chain carries Phosphoserine. Residues 438–461 (SRASVGSPGGSSEAHMAEPTLSTH) are disordered. A Rap-GAP domain is found at 605-822 (LLKLDEQGLC…RTRQEYLKDL (218 aa)). In terms of domain architecture, PDZ spans 960 to 1024 (DMTLRRNGLG…DQMIDLLRTS (65 aa)). Disordered stretches follow at residues 1040 to 1104 (PRRG…AQSL), 1117 to 1164 (RESQ…ATYA), and 1184 to 1632 (DPHF…LDPG). Polar residues-rich tracts occupy residues 1074–1104 (APWQ…AQSL) and 1151–1160 (PSGSFSTPGS). The segment covering 1190 to 1201 (DGMSSGDSSSGG) has biased composition (low complexity). The segment covering 1239 to 1255 (SRQDAAGKDSPNRHSKG) has biased composition (basic and acidic residues). The span at 1260–1275 (SSHSSSNTLSSNASSS) shows a compositional bias: low complexity. The segment covering 1298-1316 (GGSSDSGIDTTLYTSSPSC) has biased composition (polar residues). Over residues 1344–1357 (SAGRPHPVDRRREV) the composition is skewed to basic and acidic residues. The residue at position 1358 (S1358) is a Phosphoserine. T1381 carries the post-translational modification Phosphothreonine. Positions 1409 to 1436 (VYKTASAETPRPSQLSQCSPFQLSTSVP) are enriched in polar residues. K1442 is modified (N6-acetyllysine). Positions 1503–1512 (TIEDDLKKLI) are enriched in basic and acidic residues. Composition is skewed to polar residues over residues 1526-1541 (GQSP…SDES) and 1566-1578 (LFTS…SSTL). Phosphoserine is present on residues S1538 and S1541. Positions 1589-1601 (PPSGAPSTTPATG) are enriched in low complexity. Phosphoserine is present on residues S1614 and S1617. A compositionally biased stretch (basic and acidic residues) spans 1620 to 1630 (DGRDRPLRRLD). S1672 is subject to Phosphoserine. A disordered region spans residues 1678 to 1705 (AHSPVHSHLSLERGPQTPRATPTMSEES). A phosphothreonine mark is found at T1694 and T1698. Residues 1715–1769 (QLEVMLKQLHTDLQKEKQDKVVLQSEVASLRQNNQRLQEESQAASEQLRKFAELF) are a coiled coil.

The protein localises to the apical cell membrane. Plays a critical role in epithelial cell morphogenesis, polarity, adhesion and cytoskeletal organization in the lens. The protein is Signal-induced proliferation-associated 1-like protein 3 (Sipa1l3) of Mus musculus (Mouse).